The sequence spans 33 residues: Brevinin-2PTb (33 aa).

Cysteine 27 and cysteine 33 are disulfide-bonded.

As to expression, expressed by the skin glands.

It is found in the secreted. Has antibacterial activity against the Gram-positive bacterium S.aureus ATCC 25923 (MIC=9 uM) and the Gram-negative bacterium E.coli ATCC 25726 (MIC=9 uM). The chain is Brevinin-2PTb from Pulchrana picturata (Malaysian fire frog).